The following is a 361-amino-acid chain: Peptide chain release factor 1 (361 aa).

Residue Q236 is modified to N5-methylglutamine. The segment covering 285-309 (TAKDSARAADRKAQVGSGDRSERIR) has biased composition (basic and acidic residues). The segment at 285-313 (TAKDSARAADRKAQVGSGDRSERIRTYNF) is disordered.

This sequence belongs to the prokaryotic/mitochondrial release factor family. Methylated by PrmC. Methylation increases the termination efficiency of RF1.

The protein resides in the cytoplasm. Functionally, peptide chain release factor 1 directs the termination of translation in response to the peptide chain termination codons UAG and UAA. In Methylorubrum populi (strain ATCC BAA-705 / NCIMB 13946 / BJ001) (Methylobacterium populi), this protein is Peptide chain release factor 1.